A 164-amino-acid polypeptide reads, in one-letter code: Osteocalcin 2b (164 aa).

The N-terminal stretch at Met-1–Ser-18 is a signal peptide. Residues Met-19 to Arg-115 constitute a propeptide that is removed on maturation. A compositionally biased stretch (low complexity) spans Pro-30 to Ala-95. A disordered region spans residues Pro-30–Glu-99. The Gla domain occupies Gln-128 to Gly-160. 3 residues coordinate Ca(2+): Glu-130, Glu-134, and Glu-137. Glu-130, Glu-134, and Glu-137 each carry 4-carboxyglutamate. A disulfide bridge connects residues Cys-136 and Cys-142.

The protein belongs to the osteocalcin/matrix Gla protein family. In terms of processing, gamma-carboxyglutamate residues are formed by vitamin K dependent carboxylation. These residues are essential for the binding of calcium.

It is found in the secreted. Its function is as follows. Binds strongly to apatite and calcium. The protein is Osteocalcin 2b of Oncorhynchus mykiss (Rainbow trout).